We begin with the raw amino-acid sequence, 435 residues long: ATP-dependent RNA helicase RhlB (435 aa).

The Q motif motif lies at 9 to 37; sequence QKFADLGLNPQVVEGLEKKGFEFCTPIQA. The Helicase ATP-binding domain occupies 40-219; the sequence is LPVLLSGQDI…FEHMHNPEHV (180 aa). ATP is bound at residue 53–60; it reads AQTGTGKT. Residues 165–168 carry the DEAD box motif; the sequence is DEAD. A Helicase C-terminal domain is found at 245–390; the sequence is ALLQTLIEEE…VSDYDSSALI (146 aa). Positions 395 to 435 are disordered; it reads APVRTPSARNQQRRTNTGGARSGDRKSNNRRPRQPRQHKEA. The segment covering 401-413 has biased composition (polar residues); that stretch reads SARNQQRRTNTGG. A compositionally biased stretch (basic residues) spans 422–435; the sequence is NNRRPRQPRQHKEA.

Belongs to the DEAD box helicase family. RhlB subfamily. Component of the RNA degradosome, which is a multiprotein complex involved in RNA processing and mRNA degradation.

Its subcellular location is the cytoplasm. The enzyme catalyses ATP + H2O = ADP + phosphate + H(+). Its function is as follows. DEAD-box RNA helicase involved in RNA degradation. Has RNA-dependent ATPase activity and unwinds double-stranded RNA. The chain is ATP-dependent RNA helicase RhlB from Vibrio vulnificus (strain CMCP6).